The primary structure comprises 355 residues: C-C chemokine receptor type 1 (355 aa).

At 1–34 (METPNTTEDYDTTTEFDYGDATPCQKVNERAFGA) the chain is on the extracellular side. N-linked (GlcNAc...) asparagine glycosylation is present at N5. 2 cysteine pairs are disulfide-bonded: C24–C273 and C106–C183. Residues 35–60 (QLLPPLYSLVFVIGLVGNILVVLVLV) traverse the membrane as a helical segment. Residues 61–64 (QYKR) lie on the Cytoplasmic side of the membrane. Residues 65–91 (LKNMTSIYLLNLAISDLLFLFTLPFWI) traverse the membrane as a helical segment. Over 92–107 (DYKLKDDWVFGDAMCK) the chain is Extracellular. Residues 108–129 (ILSGFYYTGLYSEIFFIILLTI) form a helical membrane-spanning segment. Residues 130 to 146 (DRYLAIVHAVFALRART) are Cytoplasmic-facing. The helical transmembrane segment at 147–171 (VTFGVITSIIIWALAILASMPGLYF) threads the bilayer. Topologically, residues 172 to 197 (SKTQWEFTHHTCSLHFPHESLREWKL) are extracellular. A helical membrane pass occupies residues 198 to 223 (FQALKLNLFGLVLPLLVMIICYTGII). Over 224-239 (KILLRRPNEKKSKAVR) the chain is Cytoplasmic. A helical transmembrane segment spans residues 240–264 (LIFVIMIIFFLFWTPYNLTILISVF). At 265–281 (QDFLFTHECEQSRHLDL) the chain is on the extracellular side. Residues 282–305 (AVQVTEVIAYTHCCVNPVIYAFVG) traverse the membrane as a helical segment. Topologically, residues 306–355 (ERFRKYLRQLFHRRVAVHLVKWLPFLSVDRLERVSSTSPSTGEHELSAGF) are cytoplasmic.

This sequence belongs to the G-protein coupled receptor 1 family. In terms of assembly, interacts with CREB3. Interacts with CCL3. Interacts with CCL15. Interacts with CCL23. Interacts with GNAI1. Interacts with PF4/CXCL4. Widely expressed in different hematopoietic cells.

The protein resides in the cell membrane. In terms of biological role, chemokine receptor that plays a crucial role in regulating immune cell migration, inflammation, and immune responses. Contributes to the inflammatory response by recruiting immune cells, such as monocytes, macrophages, T-cells, and dendritic cells, to sites of inflammation for the clearance of pathogens and the resolution of tissue damage. When activated by its ligands including CCL3, CCL5-9, CCL13-16 and CCL23, triggers a signaling cascade within immune cells, leading to their migration towards the source of the chemokine. For example, mediates neutrophil migration after activation by CCL3 leading to the sequential release of TNF-alpha and leukotriene B4. Also mediates monocyte migration upon CXCL4 binding. Activation by CCL5 results in neuroinflammation through the ERK1/2 signaling pathway. The protein is C-C chemokine receptor type 1 (CCR1) of Homo sapiens (Human).